A 1633-amino-acid polypeptide reads, in one-letter code: D-lysergyl-peptide-synthetase subunit 3 (1633 aa).

The segment at 80–483 is adenylation (A) domain; sequence FRQRCDLHPD…GRKDSQIKIR (404 aa). A Carrier domain is found at 622–691; the sequence is EEHRLQRMYS…RLKDLARKAS (70 aa). Ser654 carries the post-translational modification O-(pantetheine 4'-phosphoryl)serine. Residues 836–1127 form a condensation (C) domain region; it reads PLVRMKLVEG…ILGQIHGKEA (292 aa). The interval 1256-1483 is reductase (R) domain; it reads VTGASGFIGT…EYNSSAGSEW (228 aa).

This sequence belongs to the NRP synthetase family.

It participates in alkaloid biosynthesis; ergot alkaloid biosynthesis. D-lysergyl-peptide-synthetase subunit 3; part of the gene cluster that mediates the biosynthesis of fungal ergot alkaloid. DmaW catalyzes the first step of ergot alkaloid biosynthesis by condensing dimethylallyl diphosphate (DMAP) and tryptophan to form 4-dimethylallyl-L-tryptophan. The second step is catalyzed by the methyltransferase easF that methylates 4-dimethylallyl-L-tryptophan in the presence of S-adenosyl-L-methionine, resulting in the formation of 4-dimethylallyl-L-abrine. The catalase easC and the FAD-dependent oxidoreductase easE then transform 4-dimethylallyl-L-abrine to chanoclavine-I which is further oxidized by easD in the presence of NAD(+), resulting in the formation of chanoclavine-I aldehyde. Agroclavine dehydrogenase easG then mediates the conversion of chanoclavine-I aldehyde to agroclavine via a non-enzymatic adduct reaction: the substrate is an iminium intermediate that is formed spontaneously from chanoclavine-I aldehyde in the presence of glutathione. The presence of easA is not required to complete this reaction. Further conversion of agroclavine to paspalic acid is a two-step process involving oxidation of agroclavine to elymoclavine and of elymoclavine to paspalic acid, the second step being performed by the elymoclavine oxidase cloA. Paspalic acid is then further converted to D-lysergic acid. Ergopeptines are assembled from D-lysergic acid and three different amino acids by the D-lysergyl-peptide-synthetases composed each of a monomudular and a trimodular nonribosomal peptide synthetase subunit. LpsB and lpsC encode the monomodular subunits responsible for D-lysergic acid activation and incorporation into the ergopeptine backbone. LpsA1 and A2 subunits encode the trimodular nonribosomal peptide synthetase assembling the tripeptide portion of ergopeptines. LpsA1 is responsible for formation of the major ergopeptine, ergotamine, and lpsA2 for alpha-ergocryptine, the minor ergopeptine of the total alkaloid mixture elaborated by C.purpurea. D-lysergyl-tripeptides are assembled by the nonribosomal peptide synthetases and released as N-(D-lysergyl-aminoacyl)-lactams. Cyclolization of the D-lysergyl-tripeptides is performed by the Fe(2+)/2-ketoglutarate-dependent dioxygenase easH which introduces a hydroxyl group into N-(D-lysergyl-aminoacyl)-lactam at alpha-C of the aminoacyl residue followed by spontaneous condensation with the terminal lactam carbonyl group. This chain is D-lysergyl-peptide-synthetase subunit 3, found in Claviceps purpurea (Ergot fungus).